Here is a 188-residue protein sequence, read N- to C-terminus: dCTP deaminase (188 aa).

Residues 111–116 (KSTYAR), 135–137 (TLE), glutamine 156, tyrosine 170, and glutamine 180 each bind dCTP. Glutamate 137 functions as the Proton donor/acceptor in the catalytic mechanism.

It belongs to the dCTP deaminase family. As to quaternary structure, homotrimer.

The catalysed reaction is dCTP + H2O + H(+) = dUTP + NH4(+). The protein operates within pyrimidine metabolism; dUMP biosynthesis; dUMP from dCTP (dUTP route): step 1/2. Its function is as follows. Catalyzes the deamination of dCTP to dUTP. The polypeptide is dCTP deaminase (Pseudomonas putida (strain W619)).